The following is a 262-amino-acid chain: 14-3-3 protein homolog (262 aa).

The protein belongs to the 14-3-3 family.

The polypeptide is 14-3-3 protein homolog (Trichoderma harzianum (Hypocrea lixii)).